Here is a 629-residue protein sequence, read N- to C-terminus: tRNA uridine 5-carboxymethylaminomethyl modification enzyme MnmG (629 aa).

Residues 13–18 (GGGHAG), Val125, and Ser180 contribute to the FAD site. Position 273–287 (273–287 (GPRYCPSIEDKVMRF)) interacts with NAD(+). An FAD-binding site is contributed by Gln370.

It belongs to the MnmG family. In terms of assembly, homodimer. Heterotetramer of two MnmE and two MnmG subunits. FAD is required as a cofactor.

It is found in the cytoplasm. NAD-binding protein involved in the addition of a carboxymethylaminomethyl (cmnm) group at the wobble position (U34) of certain tRNAs, forming tRNA-cmnm(5)s(2)U34. This Psychromonas ingrahamii (strain DSM 17664 / CCUG 51855 / 37) protein is tRNA uridine 5-carboxymethylaminomethyl modification enzyme MnmG.